The sequence spans 378 residues: Tyrosinase-like protein phomQ1' (378 aa).

A helical transmembrane segment spans residues 42 to 62; it reads TIIVVSVITFAAIIGCWVFLS. Positions 130 and 139 each coordinate Cu cation. Asn-209 is a glycosylation site (N-linked (GlcNAc...) asparagine). Cu cation-binding residues include His-279 and His-305.

The protein belongs to the tyrosinase family. Cu(2+) is required as a cofactor.

It localises to the membrane. It participates in mycotoxin biosynthesis. Its function is as follows. Tyrosinase-like protein; part of the gene cluster that mediates the biosynthesis of the phomopsins, a group of hexapeptide mycotoxins which infects lupins and causes lupinosis disease in livestock. The pathway starts with the processing of the precursor phomA' by several endopeptidases including kexin proteases as well as the cluster-specific S41 family peptidase phomP1 and the oligopeptidase phomG' to produce 10 identical copies of the hexapeptide Tyr-Val-Ile-Pro-Ile-Asp. After being excised from the precursor peptide, the core peptides are cyclized and modified post-translationally by enzymes encoded within the gene cluster. The timing and order of proteolysis of the phomA' precursor and PTMs are still unknown. Two tyrosinase-like enzymes, phomQ1' and phomQ2, catalyze the chlorination and hydroxylation of Tyr, respectively. PhomYb, is proposed to be involved in the construction of the macrocyclic structure. The other 4 ustYa family proteins may be involved in PTMs that generate the unique structure of phomopsin A. PhomYa' is required for the hydroxylation of C-beta of Tyr. PhomYc', phomYd', and phomYe are responsible for the biosynthesis of 2,3-dehydroisoleucine (dIle), 2,3-dehydroaspartic acid (dAsp), and 3,4-dehydroproline (dPro), respectively. While dIle formation by phomYc' is indispensable for the installation of dAsp by phomYd', the order of the other PTMs have not been elucidated yet. Most of the biosynthetic enzymes likely have broad substrate specificity, and thus, there might be a metabolic grid from a precursor to phomopsin A. The enzyme(s) responsible for the biosynthesis of 3,4-dehydrovaline (dVal) have also not been identified yet. Finally, phomM' acts as an S-adenosylmethionine-dependent alpha-N-methyltransferase that catalyzes two successive N-methylation reactions, converting N-desmethyl-phomopsin A to phomopsin A and phomopsin A further to an N,N-dimethylated congener called phomopsin E. This chain is Tyrosinase-like protein phomQ1', found in Diaporthe leptostromiformis (Lupinosis disease fungus).